The chain runs to 570 residues: Urease subunit alpha (570 aa).

A Urease domain is found at 131–570 (GGIDSHIHFI…LPMTQRYFLF (440 aa)). The Ni(2+) site is built by His136, His138, and Lys219. Lys219 is modified (N6-carboxylysine). His221 is a binding site for substrate. Ni(2+) contacts are provided by His248 and His274. His322 (proton donor) is an active-site residue. Asp362 serves as a coordination point for Ni(2+).

Belongs to the metallo-dependent hydrolases superfamily. Urease alpha subunit family. As to quaternary structure, heterotrimer of UreA (gamma), UreB (beta) and UreC (alpha) subunits. Three heterotrimers associate to form the active enzyme. Ni cation serves as cofactor. In terms of processing, carboxylation allows a single lysine to coordinate two nickel ions.

It localises to the cytoplasm. It carries out the reaction urea + 2 H2O + H(+) = hydrogencarbonate + 2 NH4(+). It functions in the pathway nitrogen metabolism; urea degradation; CO(2) and NH(3) from urea (urease route): step 1/1. In Trichodesmium erythraeum (strain IMS101), this protein is Urease subunit alpha.